A 431-amino-acid polypeptide reads, in one-letter code: Na(+)/H(+) antiporter NhaA (431 aa).

11 helical membrane-spanning segments follow: residues 33–53 (VGGALLLVAALAALVWANSPW), 74–94 (LSISAWAADGLLAIFFFVVGV), 112–132 (ALPIAAAVGGMIVPAVIFVGV), 144–164 (GWAIPVATDIAFALAVLAVIA), 173–193 (IFLLTLAVVDDLLAIIVIAVF), 197–217 (QLSFGPLAGALVTIAVFGLAV), 225–245 (FLLLPLAVVAWALMHASGVHA), 279–299 (FAVPVFAFFAAGVTVGGLSGF), 311–331 (VIAGLVLGKPIGVFLTTYVLA), 347–367 (VLGLALLAGIGFTVSLLIGEL), and 379–399 (AKIAVLTGSVLAGLLAAVVLL).

The protein belongs to the NhaA Na(+)/H(+) (TC 2.A.33) antiporter family.

It localises to the cell membrane. The enzyme catalyses Na(+)(in) + 2 H(+)(out) = Na(+)(out) + 2 H(+)(in). Functionally, na(+)/H(+) antiporter that extrudes sodium in exchange for external protons. The polypeptide is Na(+)/H(+) antiporter NhaA (Mycolicibacterium smegmatis (strain ATCC 700084 / mc(2)155) (Mycobacterium smegmatis)).